Reading from the N-terminus, the 264-residue chain is Transmembrane protein 41A (264 aa).

The first 17 residues, 1–17 (MRALLGLLLVFGGCTFA), serve as a signal peptide directing secretion. Helical transmembrane passes span 67–87 (AYVF…AIPG), 100–122 (GPWL…CYLL), 153–173 (LFFF…FLNL), 175–195 (APIL…GLIP), and 219–239 (WETV…GTLI). Positions 96-207 (GALFGPWLGL…FICVQTGSIL (112 aa)) are VTT domain.

The protein belongs to the TMEM41 family.

The protein localises to the membrane. This Mus musculus (Mouse) protein is Transmembrane protein 41A (Tmem41a).